Here is a 523-residue protein sequence, read N- to C-terminus: Cytochrome P450 CYP82J17 (523 aa).

Residues Phe-4 to Trp-24 form a helical membrane-spanning segment. Cys-462 lines the heme pocket.

This sequence belongs to the cytochrome P450 family. As to expression, mainly expressed in leaves and seed pods and, to a lower extent, in flowers and stems.

Its subcellular location is the membrane. It functions in the pathway steroid metabolism; cholesterol metabolism. In terms of biological role, involved in the biosynthesis of spiroketal steroid and saponin natural products from cholesterol such as diosgenin and analogs (e.g. furostanol and spirostanol), plant defense compounds used as main precursors for the industrial production of steroid hormones. During the 5,6-spiroketalization of cholesterol, may catalyze the 27-monohydroxylation of furostanol-type steroid to an intermediate product that undergoes a stereospecific formation of the terminal heterocycle to yield diosgenin. The chain is Cytochrome P450 CYP82J17 from Trigonella foenum-graecum (Fenugreek).